A 586-amino-acid chain; its full sequence is Ezrin (586 aa).

Residues 2–295 (PKPINVRVTT…GNHELYMRRR (294 aa)) enclose the FERM domain. Position 60 is an N6-acetyllysine (Lys-60). Positions 115–120 (IYCPPE) match the [IL]-x-C-x-x-[DE] motif motif. Tyr-146 is subject to Phosphotyrosine; by PDGFR. The interval 244–586 (EIRNISFNDK…KQRIDEFEAM (343 aa)) is interaction with SCYL3. Residues 302–462 (VQQMKAQARE…QDDLVKTKEE (161 aa)) adopt a coiled-coil conformation. Positions 305–340 (MKAQAREEKHQKQLERQQLESEKKRREAVEQEKEQM) are disordered. Basic and acidic residues predominate over residues 308–340 (QAREEKHQKQLERQQLESEKKRREAVEQEKEQM). A Phosphotyrosine; by PDGFR modification is found at Tyr-354. Phosphoserine is present on Ser-366. A Phosphotyrosine modification is found at Tyr-478. Ser-535 carries the phosphoserine modification. At Thr-567 the chain carries Phosphothreonine; by ROCK2 and PKC/PRKCI.

As to quaternary structure, interacts with PALS1. Found in a complex with EZR, PODXL and NHERF2. Interacts with MCC, PLEKHG6, PODXL, SCYL3/PACE1, NHERF1, NHERF2 and TMEM8B. Interacts (when phosphorylated) with FES/FPS. Interacts with dimeric S100P, the interaction may be activating through unmasking of F-actin binding sites. Identified in complexes that contain VIM, EZR, AHNAK, BFSP1, BFSP2, ANK2, PLEC, PRX and spectrin. Detected in a complex composed of at least EZR, AHNAK, PPL and PRX. Interacts with PDPN (via cytoplasmic domain); activates RHOA and promotes epithelial-mesenchymal transition. Interacts with SPN/CD43 cytoplasmic tail, CD44 and ICAM2. Interacts with SLC9A3; interaction targets SLC9A3 to the apical membrane. Interacts with SLC9A1; regulates interactions of SLC9A1 with cytoskeletal and promotes stress fiber formation. Interacts with CLIC5; may work together in a complex which also includes RDX and MYO6 to stabilize linkages between the plasma membrane and subjacent actin cytoskeleton at the base of stereocilia. Phosphorylated by tyrosine-protein kinases. Phosphorylation by ROCK2 suppresses the head-to-tail association of the N-terminal and C-terminal halves resulting in an opened conformation which is capable of actin and membrane-binding. Post-translationally, S-nitrosylation is induced by interferon-gamma and oxidatively-modified low-densitity lipoprotein (LDL(ox)) possibly implicating the iNOS-S100A8/9 transnitrosylase complex.

It localises to the apical cell membrane. It is found in the cell projection. The protein resides in the microvillus membrane. Its subcellular location is the ruffle membrane. The protein localises to the cytoplasm. It localises to the cell cortex. It is found in the cytoskeleton. The protein resides in the microvillus. Its activity is regulated as follows. A head-to-tail association, of the N-terminal and C-terminal halves results in a closed conformation (inactive form) which is incapable of actin or membrane-binding. Functionally, probably involved in connections of major cytoskeletal structures to the plasma membrane. In epithelial cells, required for the formation of microvilli and membrane ruffles on the apical pole. Along with PLEKHG6, required for normal macropinocytosis. This is Ezrin (EZR) from Oryctolagus cuniculus (Rabbit).